Reading from the N-terminus, the 81-residue chain is ATP synthase subunit c (81 aa).

Transmembrane regions (helical) follow at residues 6–26 (ASAS…GPGI) and 57–77 (LAFM…LLFA).

This sequence belongs to the ATPase C chain family. As to quaternary structure, F-type ATPases have 2 components, F(1) - the catalytic core - and F(0) - the membrane proton channel. F(1) has five subunits: alpha(3), beta(3), gamma(1), delta(1), epsilon(1). F(0) has four main subunits: a(1), b(1), b'(1) and c(10-14). The alpha and beta chains form an alternating ring which encloses part of the gamma chain. F(1) is attached to F(0) by a central stalk formed by the gamma and epsilon chains, while a peripheral stalk is formed by the delta, b and b' chains.

The protein localises to the cellular thylakoid membrane. In terms of biological role, f(1)F(0) ATP synthase produces ATP from ADP in the presence of a proton or sodium gradient. F-type ATPases consist of two structural domains, F(1) containing the extramembraneous catalytic core and F(0) containing the membrane proton channel, linked together by a central stalk and a peripheral stalk. During catalysis, ATP synthesis in the catalytic domain of F(1) is coupled via a rotary mechanism of the central stalk subunits to proton translocation. Key component of the F(0) channel; it plays a direct role in translocation across the membrane. A homomeric c-ring of between 10-14 subunits forms the central stalk rotor element with the F(1) delta and epsilon subunits. The sequence is that of ATP synthase subunit c from Gloeothece citriformis (strain PCC 7424) (Cyanothece sp. (strain PCC 7424)).